A 393-amino-acid chain; its full sequence is MANQSTETNQPSNMQTYGVPIYAADWIPEVDVRSKIIMDPEKSEDDDESSSSSSSSRSCIVLSGGGGEGRSGISNVILICRVDLNTNSLSEQPLGRLVVGSDLPYRMAVHPREGGLICALPNSCKLFHWEDIMSREDNQAGESEEVIKELRDVGQQLALAFNPEGSVLAAGAEDGTLRVFKWPSMNTLLNESQAHSSVKCLTFSESGQFLVSLGGPVCRVWDVNASAAVASLSKEKDEMFASCRFSVDSAGNEVLYIAANTERGGSIITCDTKLWKRKWSKPIKKNSISAFNVSADGKLLAIGTLEGDVLILESTRMQTIQVVKKAHLGLVTALTFSPDSRGLVSVSFDSRARLTMIEQKGDKPGVRWWLLVLLIVLLYVVAYYYMKAKGIIP.

Residue A2 is modified to N-acetylalanine. The Cytoplasmic segment spans residues A2–R367. Residues E41–G67 are disordered. S43 is subject to Phosphoserine. WD repeat units lie at residues R151–N190, Q193–S231, I283–V322, and A326–R367. A helical; Signal-anchor for type II membrane protein transmembrane segment spans residues W368–A388. The Lumenal portion of the chain corresponds to K389–P393.

Interacts with BZIP28.

It is found in the endoplasmic reticulum membrane. Its subcellular location is the golgi apparatus. It localises to the cis-Golgi network membrane. In terms of biological role, required for the formation or budding of transport vesicles from the ER. In Arabidopsis thaliana (Mouse-ear cress), this protein is SEC12-like protein 2 (STL2P).